Reading from the N-terminus, the 440-residue chain is tRNA(Ile)-lysidine synthase (440 aa).

ATP is bound at residue 28–33 (SGGMDS).

The protein belongs to the tRNA(Ile)-lysidine synthase family.

It localises to the cytoplasm. The catalysed reaction is cytidine(34) in tRNA(Ile2) + L-lysine + ATP = lysidine(34) in tRNA(Ile2) + AMP + diphosphate + H(+). Its function is as follows. Ligates lysine onto the cytidine present at position 34 of the AUA codon-specific tRNA(Ile) that contains the anticodon CAU, in an ATP-dependent manner. Cytidine is converted to lysidine, thus changing the amino acid specificity of the tRNA from methionine to isoleucine. The protein is tRNA(Ile)-lysidine synthase of Xanthomonas axonopodis pv. citri (strain 306).